The following is a 228-amino-acid chain: Superoxide dismutase [Mn], mitochondrial (228 aa).

A mitochondrion-targeting transit peptide spans 1–24 (MALRTLVSRRTLATGLGFRQQLRG). The Mn(2+) site is built by His-52, His-100, Asp-189, and His-193.

This sequence belongs to the iron/manganese superoxide dismutase family. As to quaternary structure, homotetramer. It depends on Mn(2+) as a cofactor.

It localises to the mitochondrion matrix. The enzyme catalyses 2 superoxide + 2 H(+) = H2O2 + O2. Destroys superoxide anion radicals which are normally produced within the cells and which are toxic to biological systems. This chain is Superoxide dismutase [Mn], mitochondrial (SODA), found in Nicotiana plumbaginifolia (Leadwort-leaved tobacco).